Reading from the N-terminus, the 273-residue chain is HTH-type transcriptional regulator NimR (273 aa).

Positions 158–258 (PKIRTMVEMM…GQTPGRYIAR (101 aa)) constitute an HTH araC/xylS-type domain. 2 DNA-binding regions (H-T-H motif) span residues 178-199 (GQWA…VKET) and 225-248 (VQKV…KKGL).

Its function is as follows. Negatively regulates expression of the nimT operon and its own expression. Acts by binding to the nimR-nimT intergenic region. This Escherichia coli (strain K12) protein is HTH-type transcriptional regulator NimR.